Consider the following 334-residue polypeptide: Nucleoid-associated protein SG1574 (334 aa).

It belongs to the YejK family.

The protein localises to the cytoplasm. It localises to the nucleoid. The sequence is that of Nucleoid-associated protein SG1574 from Sodalis glossinidius (strain morsitans).